We begin with the raw amino-acid sequence, 903 residues long: Centrobin (903 aa).

Over residues 1-10 (MATSADSPSS) the composition is skewed to polar residues. Residues 1–34 (MATSADSPSSPLGAEDLLSDSSEPPGLNQVSSEV) form a disordered region. Ser-80 is subject to Phosphoserine. 6 disordered regions span residues 110–140 (LQTS…DSDS), 471–493 (LRQA…GQHQ), 568–597 (LSTT…KEER), 669–704 (SALG…LPPA), 772–799 (RVPE…DGLT), and 837–903 (SGTD…GVWR). Positions 196–560 (RRKHCERHIQ…ERLQAMLQAH (365 aa)) form a coiled coil. Positions 365 to 903 (QEHQLKEHYQ…SMRSRGGVWR (539 aa)) are required for centrosome localization. Residues 572-590 (LPPPNPPAPPAGPSSPGPQ) are compositionally biased toward pro residues. Positions 675 to 685 (HPDHRAERPFP) are enriched in basic and acidic residues. The span at 778 to 791 (SSHSQGSGPSSGSP) shows a compositional bias: low complexity. Residue Ser-790 is modified to Phosphoserine. Residues 837–863 (SGTDGRGDNVPRRNTDSRLGEIPRKEI) show a composition bias toward basic and acidic residues.

Interacts with LYST. Widely expressed (at protein level). Highly expressed in testis. Also expressed in spleen, thymus, prostate, small intestine, colon and peripheral blood leukocytes.

The protein resides in the cytoplasm. Its subcellular location is the cytoskeleton. It localises to the microtubule organizing center. It is found in the centrosome. The protein localises to the centriole. Its function is as follows. Required for centriole duplication. Inhibition of centriole duplication leading to defects in cytokinesis. The protein is Centrobin (CNTROB) of Homo sapiens (Human).